A 217-amino-acid polypeptide reads, in one-letter code: Adenylate kinase (217 aa).

11–16 is a binding site for ATP; the sequence is GAGKGT. The interval 31–60 is NMP; that stretch reads STGDMFREAMANETPVGLEAKSYIDKGDLV. Residues threonine 32, arginine 37, 58–60, 86–89, and glutamine 93 each bind AMP; these read DLV and GFPR. Positions 127–165 are LID; it reads ARYICKNCGATYNKISNPTKVEGTCDRCGGHEFFQREDD. Arginine 128 contacts ATP. Residues cysteine 131 and cysteine 134 each contribute to the Zn(2+) site. 137–138 contributes to the ATP binding site; the sequence is TY. Zn(2+) contacts are provided by cysteine 151 and cysteine 154. Positions 162 and 173 each coordinate AMP. ATP is bound at residue glutamine 201.

The protein belongs to the adenylate kinase family. In terms of assembly, monomer.

It localises to the cytoplasm. It catalyses the reaction AMP + ATP = 2 ADP. It functions in the pathway purine metabolism; AMP biosynthesis via salvage pathway; AMP from ADP: step 1/1. Catalyzes the reversible transfer of the terminal phosphate group between ATP and AMP. Plays an important role in cellular energy homeostasis and in adenine nucleotide metabolism. The polypeptide is Adenylate kinase (Lactobacillus gasseri (strain ATCC 33323 / DSM 20243 / BCRC 14619 / CIP 102991 / JCM 1131 / KCTC 3163 / NCIMB 11718 / NCTC 13722 / AM63)).